The chain runs to 628 residues: MSDWSLDQARKTYSIPHWADGYFDVNDAGHVVVRPTADGPAVSLPEVVDAARAAGAKLPLLVRFPDILGQRLGKLQAAFAQAQADWDYAGGYTAVYPIKVNQHRGVAGTLASHHGEGFGLEAGSKPELMAVLALSRPGGLIVCNGYKDREYIRLALIGRKLGLQTFIVIEKPSELNLVLEEARALDVKPGLGVRMRLASLGAGKWQNSGGDKAKFGLSPRQVLDLWKSLRDTEYADSLNLLHFHMGSQISNVRDIANGMREATRYFVELSRLGAKISHVDVGGGLGIDYEGTRSRSYCSINYGLHSYASNIVQPLASACEEHGLPPPRIVTECGRAMTAHHAVLIANVSEVEQAPEGRVPDAHDDEPAAIRHLREIHDELDVRPAVELFQEAQHFHAEGLSAYALGQIDLTHRARIDDLFYAIAHGVRARLSFDEKSHRPVLDELNERLVDKYFVNFSVFESIPDVWAIDQVFPIVPIERLNEAPQRRGIIADMTCDSDGMVKTYVENESLDSSLPLHGLNPGESYRIGFFLVGAYQEILGDIHNLFGDTDAVEVAVDGTGYRIAQQRRGDTTDVMLDYVGYQLDTLRATYAERIAAAQLPPERAQELHDALEAGLTGYTYLSDEPLG.

K99 carries the post-translational modification N6-(pyridoxal phosphate)lysine. A substrate-binding site is contributed by 279-289 (VDVGGGLGIDY).

It belongs to the Orn/Lys/Arg decarboxylase class-II family. SpeA subfamily. The cofactor is Mg(2+). Requires pyridoxal 5'-phosphate as cofactor.

The enzyme catalyses L-arginine + H(+) = agmatine + CO2. In terms of biological role, catalyzes the biosynthesis of agmatine from arginine. The chain is Biosynthetic arginine decarboxylase from Xanthomonas campestris pv. campestris (strain ATCC 33913 / DSM 3586 / NCPPB 528 / LMG 568 / P 25).